Reading from the N-terminus, the 471-residue chain is MTNSTPIRSTHFDAIVIGSGPGGEGAAMGLTKANLNVAIIEREPSVGGGCTHWGTIPSKALRHAVSRIIEFNSNPLYCKNNTSLHSTFSDILGHAKSVIDKQTRMRQGFYDRNQCSLIFGEASFVEKNTVAVTAKDGSIETYTADKFIIATGSRPYRPEGINFNHSRVYDSDSILSLKHDPRHIIIYGAGVIGSEYASIFRGLGVKVDLVNTRDRLLSFLDNEMSDALSYHFWNSGIVTRNDENFEHIEANDDGVIMHLESGKKMKADCILFANGRTGNTDKLNLSAVGLEADSRGQLKVNDNYQTDVEHIYAVGDVIGYPSLASAAYDQGRFTAQAITKGKAEARLIDHIPTGIYTIPEISSVGKTEQELTAAKVPYEVGRSSFKHLARAQIAGKDIGSLKILFHRETKEILGIHCFGERAAEIIHIGQAIMEQKGEANTIEYFVNTTFNYPTMAEAYRVAALNGLNRLF.

Residue 41-50 (EREPSVGGGC) participates in FAD binding.

This sequence belongs to the class-I pyridine nucleotide-disulfide oxidoreductase family. The cofactor is FAD.

The protein resides in the cytoplasm. The catalysed reaction is NAD(+) + NADPH = NADH + NADP(+). Conversion of NADPH, generated by peripheral catabolic pathways, to NADH, which can enter the respiratory chain for energy generation. The sequence is that of Soluble pyridine nucleotide transhydrogenase from Aliivibrio fischeri (strain ATCC 700601 / ES114) (Vibrio fischeri).